Here is a 311-residue protein sequence, read N- to C-terminus: Urease accessory protein UreD (311 aa).

It belongs to the UreD family. In terms of assembly, ureD, UreF and UreG form a complex that acts as a GTP-hydrolysis-dependent molecular chaperone, activating the urease apoprotein by helping to assemble the nickel containing metallocenter of UreC. The UreE protein probably delivers the nickel.

It is found in the cytoplasm. Required for maturation of urease via the functional incorporation of the urease nickel metallocenter. The polypeptide is Urease accessory protein UreD (Synechococcus sp. (strain CC9605)).